A 479-amino-acid polypeptide reads, in one-letter code: Poly(A) polymerase catalytic subunit (479 aa).

Residues Asp202 and Asp204 contribute to the active site. Residues Asp202, Asp204, and Asp253 each contribute to the Ca(2+) site.

This sequence belongs to the poxviridae poly(A) polymerase catalytic subunit family. Heterodimer of a large (catalytic) subunit and a small (regulatory) subunit.

The catalysed reaction is RNA(n) + ATP = RNA(n)-3'-adenine ribonucleotide + diphosphate. In terms of biological role, polymerase that creates the 3'-poly(A) tail of mRNA's. This is Poly(A) polymerase catalytic subunit (OPG063) from Bos taurus (Bovine).